Consider the following 278-residue polypeptide: Putative ABC transporter ATP-binding protein MJ1572 (278 aa).

One can recognise an ABC transporter domain in the interval 5–242 (YRLVDVSYKY…LDELNLDVPE (238 aa)). An ATP-binding site is contributed by 38–45 (GPNGAGKT).

The protein belongs to the ABC transporter superfamily.

The protein localises to the cell membrane. Probably part of an ABC transporter complex. Responsible for energy coupling to the transport system. The protein is Putative ABC transporter ATP-binding protein MJ1572 of Methanocaldococcus jannaschii (strain ATCC 43067 / DSM 2661 / JAL-1 / JCM 10045 / NBRC 100440) (Methanococcus jannaschii).